The following is a 200-amino-acid chain: Holliday junction branch migration complex subunit RuvA (200 aa).

The tract at residues 1-64 is domain I; the sequence is MIGRIVGTLI…EDSHTLYGFI (64 aa). Residues 65–143 are domain II; that stretch reads DKNERALFRV…QAAKTDLFSA (79 aa). Residues 144-149 form a flexible linker region; the sequence is PAVLRQ. Residues 150 to 200 form a domain III region; sequence VQADPRQEAEAALISLGYKPQEAAKAIAGVPVDAANSEDVIKAALKGMLRK.

The protein belongs to the RuvA family. Homotetramer. Forms an RuvA(8)-RuvB(12)-Holliday junction (HJ) complex. HJ DNA is sandwiched between 2 RuvA tetramers; dsDNA enters through RuvA and exits via RuvB. An RuvB hexamer assembles on each DNA strand where it exits the tetramer. Each RuvB hexamer is contacted by two RuvA subunits (via domain III) on 2 adjacent RuvB subunits; this complex drives branch migration. In the full resolvosome a probable DNA-RuvA(4)-RuvB(12)-RuvC(2) complex forms which resolves the HJ.

It is found in the cytoplasm. Its function is as follows. The RuvA-RuvB-RuvC complex processes Holliday junction (HJ) DNA during genetic recombination and DNA repair, while the RuvA-RuvB complex plays an important role in the rescue of blocked DNA replication forks via replication fork reversal (RFR). RuvA specifically binds to HJ cruciform DNA, conferring on it an open structure. The RuvB hexamer acts as an ATP-dependent pump, pulling dsDNA into and through the RuvAB complex. HJ branch migration allows RuvC to scan DNA until it finds its consensus sequence, where it cleaves and resolves the cruciform DNA. In Marinomonas sp. (strain MWYL1), this protein is Holliday junction branch migration complex subunit RuvA.